Here is a 506-residue protein sequence, read N- to C-terminus: Probable malate:quinone oxidoreductase (506 aa).

It belongs to the MQO family. The cofactor is FAD.

The catalysed reaction is (S)-malate + a quinone = a quinol + oxaloacetate. The protein operates within carbohydrate metabolism; tricarboxylic acid cycle; oxaloacetate from (S)-malate (quinone route): step 1/1. This is Probable malate:quinone oxidoreductase from Rhodococcus jostii (strain RHA1).